The following is a 261-amino-acid chain: CD40 ligand (261 aa).

The Cytoplasmic segment spans residues 1–22 (MIETYNQTSPRSAATGLPISMK). The chain crosses the membrane as a helical; Signal-anchor for type II membrane protein span at residues 23–46 (IFMYLLTVFLITQMIGSALFAVYL). Residues 47–261 (HRRLDKIEDE…GFTSFGLLKL (215 aa)) lie on the Extracellular side of the membrane. A THD domain is found at 122-261 (IAAHVISEAS…GFTSFGLLKL (140 aa)). Cysteines 178 and 218 form a disulfide. N240 carries an N-linked (GlcNAc...) (complex) asparagine; alternate glycan. A glycan (N-linked (GlcNAc...) (high mannose) asparagine; alternate) is linked at N240.

It belongs to the tumor necrosis factor family. Homotrimer. Interacts with isoform 3 of CD28. CD40 ligand, soluble form: Exists as either a monomer or a homotrimer. Forms a ternary complex between CD40 and integrins for CD40-CD40LG signaling. The soluble form derives from the membrane form by proteolytic processing. In terms of processing, N-linked glycan is a mixture of high mannose and complex type. Glycan structure does not influence binding affinity to CD40. Post-translationally, not O-glycosylated. Specifically expressed on activated CD4+ T-lymphocytes.

It localises to the cell membrane. The protein localises to the cell surface. The protein resides in the secreted. Cytokine that acts as a ligand to CD40/TNFRSF5. Costimulates T-cell proliferation and cytokine production. Its cross-linking on T-cells generates a costimulatory signal which enhances the production of IL4 and IL10 in conjunction with the TCR/CD3 ligation and CD28 costimulation. Induces the activation of NF-kappa-B. Induces the activation of kinases MAPK8 and PAK2 in T-cells. Induces tyrosine phosphorylation of isoform 3 of CD28. Mediates B-cell proliferation in the absence of co-stimulus as well as IgE production in the presence of IL4. Involved in immunoglobulin class switching. Functionally, acts as a ligand for integrins, specifically ITGA5:ITGB1 and ITGAV:ITGB3; both integrins and the CD40 receptor are required for activation of CD40-CD40LG signaling, which have cell-type dependent effects, such as B-cell activation, NF-kappa-B signaling and anti-apoptotic signaling. This Homo sapiens (Human) protein is CD40 ligand (CD40LG).